Reading from the N-terminus, the 131-residue chain is Profilin-4 (131 aa).

Belongs to the profilin family. Occurs in many kinds of cells as a complex with monomeric actin in a 1:1 ratio.

It localises to the cytoplasm. The protein resides in the cytoskeleton. Binds to actin and affects the structure of the cytoskeleton. At high concentrations, profilin prevents the polymerization of actin, whereas it enhances it at low concentrations. By binding to PIP2, it inhibits the formation of IP3 and DG. In Hevea brasiliensis (Para rubber tree), this protein is Profilin-4.